Consider the following 160-residue polypeptide: Cytochrome b6-f complex subunit 4 (160 aa).

3 consecutive transmembrane segments (helical) span residues 36–56, 95–115, and 128–148; these read LLYI…GLAV, LLGI…PFIE, and VAMT…IGAA.

It belongs to the cytochrome b family. PetD subfamily. The 4 large subunits of the cytochrome b6-f complex are cytochrome b6, subunit IV (17 kDa polypeptide, PetD), cytochrome f and the Rieske protein, while the 4 small subunits are PetG, PetL, PetM and PetN. The complex functions as a dimer.

Its subcellular location is the cellular thylakoid membrane. In terms of biological role, component of the cytochrome b6-f complex, which mediates electron transfer between photosystem II (PSII) and photosystem I (PSI), cyclic electron flow around PSI, and state transitions. The protein is Cytochrome b6-f complex subunit 4 of Synechococcus sp. (strain CC9902).